The sequence spans 471 residues: MSIQTSDPNETSDLKSLSLIAAHSHITGLGLDENLQPRPTSEGMVGQLQARRAAGVILKMVQNGTIAGRAVLVAGPPSTGKTALAMGVSQSLGKDVPFTAIAGSEIFSLELSKTEALTQAFRKSIGIKIKEETELIEGEVVEIQIDRSITGGHKQGKLTIKTTDMETIYELGNKMIDGLTKEKVLAGDVISIDKASGKITKLGRSFARSRDYDAMGADTRFVQCPEGELQKRKTVVHTVSLHEIDVINSRTQGFLALFTGDTGEIRSEVRDQINTKVAEWKEEGKAEIVPGVLFIDEVHMLDIECFSFINRALEDEFAPIVMMATNRGVSKTRGTNYKSPHGLPLDLLDRSIIITTKSYNEQEIKTILSIRAQEEEVELSSDALDLLTKTGVETSLRYSSNLISVAQQIAMKRKNNTVEVEDVKRAYLLFLDSARSVKYVQENESQYIDDQGNVQISIAKSADPDAMDTTE.

75–82 lines the ATP pocket; sequence GPPSTGKT.

The protein belongs to the RuvB family. As to quaternary structure, probably forms a homohexamer. Interacts with RVB1 and may form heterododecamers with RVB1. Component of the SWR1 chromatin remodeling complex composed of at least ACT1, ARP4, RVB1, RVB2, ARP6, YAF9, VPS71, VPS72, SWC3, SWC4, SWC5, SWC7 and SWR1, and perhaps BDF1. Component of the chromatin-remodeling INO80 complex, at least composed of ARP4, ARP5, ARP8, RVB1, RVB2, TAF14, NHP10, IES1, IES3, IES4, IES6, ACT1, IES2, IES5 and INO80. Also belongs to the R2TP complex composed of at least RVB1, RVB2, TAH1 and PIH1. Interacts with SPT15/TBP.

The protein resides in the nucleus. It is found in the nucleoplasm. It catalyses the reaction ATP + H2O = ADP + phosphate + H(+). In terms of biological role, DNA helicase which participates in several chromatin remodeling complexes, including the SWR1 and the INO80 complexes. The SWR1 complex mediates the ATP-dependent exchange of histone H2A for the H2A variant HZT1 leading to transcriptional regulation of selected genes by chromatin remodeling. The INO80 complex remodels chromatin by shifting nucleosomes. Its ability to induce transcription of some phosphate-responsive genes is modulated by inositol polyphosphates. The INO80 complex is involved in DNA repair by associating to 'Ser-129' phosphorylated H2A histones as a response to DNA damage. During transcription may recruit SPT15/TBP to the TATA-boxes of involved genes. Required for box C/D and box H/ACA snoRNA accumulation and involved in pre-rRNA processing. The protein is RuvB-like protein 2 (RVB2) of Saccharomyces cerevisiae (strain ATCC 204508 / S288c) (Baker's yeast).